The chain runs to 340 residues: MGKDYYQTLGLARGASDEEIKRAYRRQALRYHPDKNKEPGAEEKFKEIAEAYDVLSDPRKREIFDRYGEEGLKGSGPSGGSSGGTNGTSFSYTFHGDPHAMFAEFFGGRNPFDNFFGQRNGEEGMDIDDPFSGFPMGMGGFTNMNFGRSRPAQEPTRKKQDPPVTHDLRVSLEEIYSGCTKKMKISHKRLNPDGKSIRNEDKILTIEVKRGWKEGTKITFPKEGDQTSNNIPADIVFVLKDKPHNIFKRDGSDVIYPARISLREALCGCTVNVPTLDGRTIPVVFKDVIRPGMRRKVPGEGLPLPKTPEKRGDLIIEFEVIFPERIPQTSRTVLEQVLPI.

The J domain maps to 2-70 (GKDYYQTLGL…REIFDRYGEE (69 aa)). The interval 68-90 (GEEGLKGSGPSGGSSGGTNGTSF) is disordered. Over residues 73 to 86 (KGSGPSGGSSGGTN) the composition is skewed to gly residues. Thr307 is subject to Phosphothreonine.

Interacts with DNAJC3. Interacts with HSF1 (via transactivation domain); this interaction results in the inhibition of heat shock- and HSF1-induced transcriptional activity during the attenuation and recovery phase period of the heat shock response. Interacts with BAG3.

The protein resides in the cytoplasm. Its subcellular location is the nucleus. The protein localises to the nucleolus. Functionally, interacts with HSP70 and can stimulate its ATPase activity. Stimulates the association between HSC70 and HIP. Negatively regulates heat shock-induced HSF1 transcriptional activity during the attenuation and recovery phase period of the heat shock response. Stimulates ATP hydrolysis and the folding of unfolded proteins mediated by HSPA1A/B (in vitro). This is DnaJ homolog subfamily B member 1 (DNAJB1) from Bos taurus (Bovine).